A 103-amino-acid chain; its full sequence is Large ribosomal subunit protein bL21 (103 aa).

Belongs to the bacterial ribosomal protein bL21 family. In terms of assembly, part of the 50S ribosomal subunit. Contacts protein L20.

In terms of biological role, this protein binds to 23S rRNA in the presence of protein L20. This Mycolicibacterium smegmatis (strain ATCC 700084 / mc(2)155) (Mycobacterium smegmatis) protein is Large ribosomal subunit protein bL21.